The sequence spans 186 residues: Peptidyl-tRNA hydrolase (186 aa).

Residue Y14 participates in tRNA binding. H19 acts as the Proton acceptor in catalysis. Residues Y64, N66, and N112 each contribute to the tRNA site.

It belongs to the PTH family. Monomer.

It is found in the cytoplasm. The catalysed reaction is an N-acyl-L-alpha-aminoacyl-tRNA + H2O = an N-acyl-L-amino acid + a tRNA + H(+). Its function is as follows. Hydrolyzes ribosome-free peptidyl-tRNAs (with 1 or more amino acids incorporated), which drop off the ribosome during protein synthesis, or as a result of ribosome stalling. Functionally, catalyzes the release of premature peptidyl moieties from peptidyl-tRNA molecules trapped in stalled 50S ribosomal subunits, and thus maintains levels of free tRNAs and 50S ribosomes. This is Peptidyl-tRNA hydrolase from Mesoplasma florum (strain ATCC 33453 / NBRC 100688 / NCTC 11704 / L1) (Acholeplasma florum).